Here is a 127-residue protein sequence, read N- to C-terminus: Fluoride-specific ion channel FluC (127 aa).

4 helical membrane passes run 4–24 (IMLAVFLGGGTGSVLRWWLGL), 35–55 (VGTLTANLAGAFIIGAGLAWF), 71–91 (TGLCGGLTTFSTFSAEVVFLL), and 101–121 (LNVALNLFGSFMMTALAFWLF). Positions 75 and 78 each coordinate Na(+).

Belongs to the fluoride channel Fluc/FEX (TC 1.A.43) family.

It localises to the cell inner membrane. It catalyses the reaction fluoride(in) = fluoride(out). Its activity is regulated as follows. Na(+) is not transported, but it plays an essential structural role and its presence is essential for fluoride channel function. Its function is as follows. Fluoride-specific ion channel. Important for reducing fluoride concentration in the cell, thus reducing its toxicity. The sequence is that of Fluoride-specific ion channel FluC from Cronobacter sakazakii (strain ATCC BAA-894) (Enterobacter sakazakii).